The primary structure comprises 158 residues: C-type lectin (158 aa).

An N-terminal signal peptide occupies residues 1 to 23 (MGHFTFISLCLMPIFLSLSGAEC). Cystine bridges form between Cys26–Cys37, Cys54–Cys154, Cys61–Cys156, and Cys129–Cys146. Positions 33–155 (RNGLCYKLFD…CESLFAFICR (123 aa)) constitute a C-type lectin domain. N-linked (GlcNAc...) asparagine glycans are attached at residues Asn111 and Asn121. Residues 119–121 (EPN) carry the Mannose-binding motif. Glu127, Asn142, and Asp143 together coordinate Ca(2+).

This sequence belongs to the true venom lectin family. Homodimer; non-covalently linked. Expressed by the venom gland.

Its subcellular location is the secreted. Its function is as follows. Mannose-binding lectin which recognizes specific carbohydrate structures and agglutinates a variety of animal cells by binding to cell-surface glycoproteins and glycolipids. May be a calcium-dependent lectin. The sequence is that of C-type lectin from Micrurus corallinus (Brazilian coral snake).